A 988-amino-acid chain; its full sequence is Voltage-gated delayed rectifier potassium channel KCNH5 (988 aa).

Residues 1–217 (MPGGKRGLVA…LHYCAFKTTW (217 aa)) are Cytoplasmic-facing. In terms of domain architecture, PAS spans 14–86 (TFLENIVRRS…TIEKVRQTFD (73 aa)). Residues 91 to 143 (NCFEVLLYKKNRTPVWFYMQIAPIRNEHEKVVLFLCTFKDITLFKQPIEDDST) form the PAC domain. A helical membrane pass occupies residues 218-238 (DWVILILTFYTAIMVPYNVSF). The Extracellular portion of the chain corresponds to 239–243 (KTKQN). Residues 244 to 264 (NIAWLVLDSVVDVIFLVDIVL) traverse the membrane as a helical segment. Residues 265–291 (NFHTTFVGPGGEVISDPKLIRMNYLKT) are Cytoplasmic-facing. A helical transmembrane segment spans residues 292–312 (WFVIDLLSCLPYDIINAFENV). Residues 313–319 (DEGISSL) lie on the Extracellular side of the membrane. Residues 320-340 (FSSLKVVRLLRLGRVARKLDH) form a helical; Voltage-sensor membrane-spanning segment. The Cytoplasmic segment spans residues 341–346 (YLEYGA). The helical transmembrane segment at 347–367 (AVLVLLVCVFGLVAHWLACIW) threads the bilayer. The Extracellular segment spans residues 368–419 (YSIGDYEVIDEVTNTIQIDSWLYQLALSIGTPYRYNTSAGIWEGGPSKDSLY). An N-linked (GlcNAc...) asparagine glycan is attached at N403. An intramembrane region (pore-forming) is located at residues 420–440 (VSSLYFTMTSLTTIGFGNIAP). The short motif at 432–437 (TIGFGN) is the Selectivity filter element. At 441 to 446 (TTDVEK) the chain is on the extracellular side. The chain crosses the membrane as a helical span at residues 447 to 467 (MFSVAMMMVGSLLYATIFGNV). At 468–988 (TTIFQQMYAN…PESDKDEINF (521 aa)) the chain is on the cytoplasmic side. 550-667 (AFRLASDGCL…NSFSRNLTLT (118 aa)) contacts a nucleoside 3',5'-cyclic phosphate. The tract at residues 704 to 715 (HPVRKLFQKFKQ) is calmodulin-binding. The disordered stretch occupies residues 718–742 (ELRNQGSAQSDPERSQLQVESRPLQ). Residues 721-742 (NQGSAQSDPERSQLQVESRPLQ) are compositionally biased toward polar residues. Residue K785 forms a Glycyl lysine isopeptide (Lys-Gly) (interchain with G-Cter in ubiquitin) linkage. Disordered stretches follow at residues 839-897 (LLSE…AKHP) and 946-965 (SVPQTSSPKPQIPLQVPPQI). The segment covering 871–885 (SDLRLDKAGEARSPL) has biased composition (basic and acidic residues). S883 is modified (phosphoserine). Residues 909–948 (TLQEVKHELKEDIQLLSCRMTALEKQVAEILKLLSEKSVP) are CAD (involved in subunit assembly).

It belongs to the potassium channel family. H (Eag) (TC 1.A.1.20) subfamily. Kv10.2/KCNH5 sub-subfamily. In terms of assembly, homotetramer. The potassium channel is probably composed of a homo- or heterotetrameric complex of pore-forming alpha subunits that can associate with modulating beta subunits. Heteromultimer with KCNH1/EAG. Detected in adult testis and in embryonic and adult brain, but not in other tissues. Highly expressed in specific brain areas, such as neocortex, olfactory bulb, primary olfactory cortex and brain stem. In cortex, expression is concentrated in a narrow band toward the middle lamella (layer IV). Moderately expressed in spinal cord, dorsal thalamic nuclei, medial hypothalamus, colliculus, lateral lemniscus, pontine nuclei and Islands of Calleja.

The protein resides in the membrane. It carries out the reaction K(+)(in) = K(+)(out). With respect to regulation, inhibited by low nanomolar concentrations of cytosolic calcium. In terms of biological role, pore-forming (alpha) subunit of a voltage-gated delayed rectifier potassium channel that mediates outward-rectifying potassium currents which, on depolarization, reaches a steady-state level and do not inactivate. The kinetic is characterized by a slow activation time course and a small voltage dependence of the activation time constants, therefore, starts to open at more negative voltages. The activation kinetics depend on the prepulse potential and external divalent cation concentration. The time course of activation is biphasic with a fast and a slowly activating current component. With negative prepulses, the current activation is delayed and slowed down several fold, whereas more positive prepulses speed up activation, therefore the activation rate depends on holding potential. The protein is Voltage-gated delayed rectifier potassium channel KCNH5 of Rattus norvegicus (Rat).